Here is a 98-residue protein sequence, read N- to C-terminus: Protein Frey 1 (98 aa).

Residues 13-29 (AGLSLFLHLILAVALLR) traverse the membrane as a helical segment. A disordered region spans residues 60-87 (YGILPKHPRPRGPRPLLSRAQQRKRDGP).

In terms of assembly, interacts with SPPL2C (via active sites); the interaction stabilizes FREY1 protein and inhibits SPPL2C proteolytic activity. Interacts with IZUMO1; the interaction retains IZUMO1 at the endoplasmic reticulum membrane and coordinates IZUMO1 complex assembly.

The protein resides in the endoplasmic reticulum membrane. Functionally, key regulator for male fertility expressed transiently in round spermatids where it recruits IZUMO1 at the endoplasmic reticulum (ER) membrane and coordinates the oolemmal binding multimeric complex (IZUMO1 complex) assembly. Upon complete assembly of the IZUMO1 complex, its ER retention is released, facilitating IZUMO1 complex export to the acrosome. Through the interaction with SPPL2C, inhibits its intramembrane protease activity directly accessing the catalytic center of an I-CLiP. The protein is Protein Frey 1 of Homo sapiens (Human).